The primary structure comprises 218 residues: Ribose-5-phosphate isomerase A (218 aa).

Residues 28 to 31 (TGST), 81 to 84 (DGAD), and 94 to 97 (KGGG) each bind substrate. The active-site Proton acceptor is the Glu103. Lys121 is a substrate binding site.

Belongs to the ribose 5-phosphate isomerase family. Homodimer.

It carries out the reaction aldehydo-D-ribose 5-phosphate = D-ribulose 5-phosphate. It functions in the pathway carbohydrate degradation; pentose phosphate pathway; D-ribose 5-phosphate from D-ribulose 5-phosphate (non-oxidative stage): step 1/1. Functionally, catalyzes the reversible conversion of ribose-5-phosphate to ribulose 5-phosphate. This Proteus mirabilis (strain HI4320) protein is Ribose-5-phosphate isomerase A.